Here is a 61-residue protein sequence, read N- to C-terminus: Large ribosomal subunit protein uL30 (61 aa).

The protein belongs to the universal ribosomal protein uL30 family. In terms of assembly, part of the 50S ribosomal subunit.

This Shewanella halifaxensis (strain HAW-EB4) protein is Large ribosomal subunit protein uL30.